Here is a 265-residue protein sequence, read N- to C-terminus: U6 snRNA phosphodiesterase 1 (265 aa).

The tract at residues 1 to 67 is disordered; sequence MSAAPLVGYS…EGPVDDSAKH (67 aa). Residues 20-32 show a composition bias toward basic and acidic residues; the sequence is AGARVRPGAEGRS. His120 functions as the Proton acceptor in the catalytic mechanism. 120–122 lines the AMP pocket; the sequence is HLS. UMP contacts are provided by residues Gln164, Tyr202, and 206 to 210; that span reads SFHIS. AMP-binding positions include Tyr202 and 204–210; that span reads DPSFHIS. The Proton donor role is filled by His208.

Belongs to the 2H phosphoesterase superfamily. USB1 family. As to quaternary structure, interacts with PLRG1, CDC5L and PRPF19.

It is found in the nucleus. It carries out the reaction a 3'-end uridylyl-uridine-RNA = a 3'-end 2',3'-cyclophospho-uridine-RNA + uridine. The catalysed reaction is a 3'-end uridylyl-adenosine-RNA = a 3'-end 2',3'-cyclophospho-uridine-RNA + adenosine. In terms of biological role, 3'-5' RNA exonuclease that trims the 3' end of oligo(U) and oligo(A) tracts of the pre-U6 small nuclear RNA (snRNA) molecule, leading to the formation of a mature U6 snRNA 3' end-terminated with a 2',3'-cyclic phosphate. Participates in the U6 snRNA 3' end processing that prevents U6 snRNA degradation. In addition also removes uridines from the 3' end of U6atac snRNA and possibly the vault RNA VTRNA1-1. The sequence is that of U6 snRNA phosphodiesterase 1 from Bos taurus (Bovine).